The following is a 41-amino-acid chain: Large ribosomal subunit protein bL36 (41 aa).

The protein belongs to the bacterial ribosomal protein bL36 family.

The sequence is that of Large ribosomal subunit protein bL36 from Neisseria gonorrhoeae (strain ATCC 700825 / FA 1090).